A 650-amino-acid polypeptide reads, in one-letter code: DNA gyrase subunit B (650 aa).

Basic and acidic residues predominate over residues 400–414; that stretch reads RRSQEARELTRRKSP. Positions 400–422 are disordered; the sequence is RRSQEARELTRRKSPFDSGSLPG. Positions 435 to 549 constitute a Toprim domain; the sequence is SELYIVEGDS…QGNIYIAQPP (115 aa). Mg(2+) contacts are provided by Glu-441, Asp-514, and Asp-516.

It belongs to the type II topoisomerase GyrB family. In terms of assembly, heterotetramer, composed of two GyrA and two GyrB chains. In the heterotetramer, GyrA contains the active site tyrosine that forms a transient covalent intermediate with DNA, while GyrB binds cofactors and catalyzes ATP hydrolysis. It depends on Mg(2+) as a cofactor. The cofactor is Mn(2+). Requires Ca(2+) as cofactor.

It localises to the cytoplasm. It catalyses the reaction ATP-dependent breakage, passage and rejoining of double-stranded DNA.. Its function is as follows. A type II topoisomerase that negatively supercoils closed circular double-stranded (ds) DNA in an ATP-dependent manner to modulate DNA topology and maintain chromosomes in an underwound state. Negative supercoiling favors strand separation, and DNA replication, transcription, recombination and repair, all of which involve strand separation. Also able to catalyze the interconversion of other topological isomers of dsDNA rings, including catenanes and knotted rings. Type II topoisomerases break and join 2 DNA strands simultaneously in an ATP-dependent manner. The chain is DNA gyrase subunit B from Mycoplasma pneumoniae (strain ATCC 29342 / M129 / Subtype 1) (Mycoplasmoides pneumoniae).